Here is a 354-residue protein sequence, read N- to C-terminus: Small ribosomal subunit biogenesis GTPase RsgA (354 aa).

Residues 1-46 (MSKKKPLSQGQLRRMRANHEKRLNRDSGDKNTPELQDSSLGPEQSG) are disordered. Over residues 17-32 (ANHEKRLNRDSGDKNT) the composition is skewed to basic and acidic residues. Over residues 33-46 (PELQDSSLGPEQSG) the composition is skewed to polar residues. Positions 108–276 (HSSLSRPDLY…LIDSPGVREF (169 aa)) constitute a CP-type G domain. Residues 164 to 167 (NKID) and 218 to 226 (GQSGVGKSS) each bind GTP. Zn(2+) is bound by residues C300, C305, H307, and C313.

It belongs to the TRAFAC class YlqF/YawG GTPase family. RsgA subfamily. Monomer. Associates with 30S ribosomal subunit, binds 16S rRNA. Zn(2+) is required as a cofactor.

It is found in the cytoplasm. In terms of biological role, one of several proteins that assist in the late maturation steps of the functional core of the 30S ribosomal subunit. Helps release RbfA from mature subunits. May play a role in the assembly of ribosomal proteins into the subunit. Circularly permuted GTPase that catalyzes slow GTP hydrolysis, GTPase activity is stimulated by the 30S ribosomal subunit. This Shewanella oneidensis (strain ATCC 700550 / JCM 31522 / CIP 106686 / LMG 19005 / NCIMB 14063 / MR-1) protein is Small ribosomal subunit biogenesis GTPase RsgA.